The primary structure comprises 429 residues: Ribosomal RNA small subunit methyltransferase B (429 aa).

S-adenosyl-L-methionine contacts are provided by residues 254–260 (CAAPGGK), Asp-277, Asp-303, and Asp-322. Cys-375 serves as the catalytic Nucleophile.

Belongs to the class I-like SAM-binding methyltransferase superfamily. RsmB/NOP family.

Its subcellular location is the cytoplasm. The catalysed reaction is cytidine(967) in 16S rRNA + S-adenosyl-L-methionine = 5-methylcytidine(967) in 16S rRNA + S-adenosyl-L-homocysteine + H(+). In terms of biological role, specifically methylates the cytosine at position 967 (m5C967) of 16S rRNA. This Shigella sonnei (strain Ss046) protein is Ribosomal RNA small subunit methyltransferase B.